The chain runs to 426 residues: Histidine--tRNA ligase (426 aa).

The protein belongs to the class-II aminoacyl-tRNA synthetase family. Homodimer.

It is found in the cytoplasm. It carries out the reaction tRNA(His) + L-histidine + ATP = L-histidyl-tRNA(His) + AMP + diphosphate + H(+). The sequence is that of Histidine--tRNA ligase from Streptococcus agalactiae serotype Ia (strain ATCC 27591 / A909 / CDC SS700).